Consider the following 1292-residue polypeptide: MKKHFTLPRNAILRDGGEPHSPNPSISKSKPPRKLRSAKENAPPLDRNTSTPDHRSMRMKNPLPPRPPPSNPLKRKLSAETATESGFSDSGVKVIVRMKPLNKGEEGDMIVEKMSKDSLTVSGQTFTFDSIANPESTQEQMFQLVGAPLVENCLSGFNSSVFAYGQTGSGKTYTMWGPANGLLEEHLCGDQRGLTPRVFERLFARIKEEQVKHAERQLNYQCRCSLLEIYNEQITDLLDPSQKNLMIREDVKSGVYVENLTEEYVKNLTDVSQLLIKGLGNRRTGATSVNTESSRSHCVFTCVVESRCKNVADGLSSFKTSRINLVDLAGSERQKSTGAAGERLKEAGNINRSLSQLGNLINILAEISQTGKPRHIPYRDSRLTFLLQESLGGNAKLAMVCAVSPSQSCRSETFSTLRFAQRAKAIQNKAVVNEVMQDDVNFLRGVIHQLRDELQRMKNDGNNPTNPNVAYSTAWNARRSLNLLRSFGLGHPRSLPHEDNDGDIEMEIDEAAVERLCVQVGLQSSLASEGINHDMNRVKSIHSSDGQSIEKRLPEDSDVAMEDACCHTENHEPETVDNMRTETETGIRENQIKTHSQTLDHESSFQPLSVKDALCSSLNKSEDVSSCPDLVPQDVTSANVLIADGVDDPEHLVNSASPSLCIDPVGATPVLKSPTLSVSPTIRNSRKSLKTSELSTASQKDSEGENLVTEAADPSPATSKKMNNCSSALSTQKSKVFPVRTERLASSLHKGIKLLESYCQSTAQRRSTYRFSFKAPDSEPSTSISKADAGVQTIPGADAISEENTKEFLCCKCKCREQFDAQQMGDMPNLQLVPVDNSEVAEKSKNQVPKAVEKVLAGSIRREMALEEFCTKQASEITQLNRLVQQYKHERECNAIIGQTREDKIIRLESLMDGVLSKEDFLDEEFASLLHEHKLLKDMYQNHPEVLKTKIELERTQEEVENFKNFYGDMGEREVLLEEIQDLKLQLQCYIDPSLKSALKTCTLLKLSYQAPPVNAIPESQDESLEKTLEQERLCWTEAETKWISLSEELRTELEASKALINKQKHELEIEKRCGEELKEAMQMAMEGHARMLEQYADLEEKHMQLLARHRRIQDGIDDVKKAAARAGVRGAESRFINALAAEISALKVEKEKERQYLRDENKSLQTQLRDTAEAIQAAGELLVRLKEAEEGLTVAQKRAMDAEYEAAEAYRQIDKLKKKHENEINTLNQLVPQSHIHNECSTKCDQAVEPSVNASSEQQWRDEFEPLYKKETEFSNLAEPSWFSGYDRCNI.

Positions 1–86 (MKKHFTLPRN…LSAETATESG (86 aa)) are disordered. Low complexity predominate over residues 19 to 29 (PHSPNPSISKS). Positions 62 to 71 (PLPPRPPPSN) are enriched in pro residues. Positions 91-426 (GVKVIVRMKP…LRFAQRAKAI (336 aa)) constitute a Kinesin motor domain. 165–172 (GQTGSGKT) serves as a coordination point for ATP. Microtubules-binding stretches follow at residues 293–297 (SSRSH), 326–332 (VDLAGSE), and 375–379 (HIPYR). Residues 424-461 (KAIQNKAVVNEVMQDDVNFLRGVIHQLRDELQRMKNDG) form a neck region. The disordered stretch occupies residues 677-724 (SVSPTIRNSRKSLKTSELSTASQKDSEGENLVTEAADPSPATSKKMNN). Coiled coils occupy residues 945–992 (EVLK…CYID) and 1047–1232 (SEEL…NQLV).

The protein belongs to the TRAFAC class myosin-kinesin ATPase superfamily. Kinesin family. KIN-12 subfamily. As to quaternary structure, homodimer and heterodimer with KIN12B. Interacts with TIO.

The protein resides in the cytoplasm. It localises to the cytoskeleton. It is found in the phragmoplast. Plus-end directed kinesin-like motor enzyme that plays a critical role in the organization of phragmoplast microtubules during cytokinesis. Constitutes a signaling module in association with serine/threonine-protein kinase TIO that is required to support phragmoplast expansion and cell-plate growth in plant cells. Binds microtubules in an ATP-sensitive manner. The protein is Kinesin-like protein KIN-12A of Arabidopsis thaliana (Mouse-ear cress).